A 225-amino-acid polypeptide reads, in one-letter code: Heptaprenylglyceryl phosphate synthase (225 aa).

K6 provides a ligand contact to sn-glycerol 1-phosphate. Residues D8 and T34 each contribute to the Mg(2+) site. Sn-glycerol 1-phosphate is bound by residues 153-158 (YVEYSG), G183, and 203-204 (GN).

It belongs to the GGGP/HepGP synthase family. Group I subfamily. Homodimer. Mg(2+) is required as a cofactor.

It catalyses the reaction sn-glycerol 1-phosphate + all-trans-heptaprenyl diphosphate = 3-heptaprenyl-sn-glycero-1-phosphate + diphosphate. Its pathway is membrane lipid metabolism; glycerophospholipid metabolism. Its function is as follows. Prenyltransferase that catalyzes in vivo the transfer of the heptaprenyl moiety of heptaprenyl pyrophosphate (HepPP; 35 carbon atoms) to the C3 hydroxyl of sn-glycerol-1-phosphate (G1P), producing heptaprenylglyceryl phosphate (HepGP). This reaction is an ether-bond-formation step in the biosynthesis of archaea-type G1P-based membrane lipids found in Bacillales. In Listeria monocytogenes serotype 4b (strain CLIP80459), this protein is Heptaprenylglyceryl phosphate synthase.